Consider the following 296-residue polypeptide: Ribosomal RNA small subunit methyltransferase H (296 aa).

S-adenosyl-L-methionine contacts are provided by residues 30–32, D49, F76, D97, and Q104; that span reads GGH.

Belongs to the methyltransferase superfamily. RsmH family.

Its subcellular location is the cytoplasm. It catalyses the reaction cytidine(1402) in 16S rRNA + S-adenosyl-L-methionine = N(4)-methylcytidine(1402) in 16S rRNA + S-adenosyl-L-homocysteine + H(+). Its function is as follows. Specifically methylates the N4 position of cytidine in position 1402 (C1402) of 16S rRNA. In Mesomycoplasma hyopneumoniae (strain 232) (Mycoplasma hyopneumoniae), this protein is Ribosomal RNA small subunit methyltransferase H.